A 549-amino-acid polypeptide reads, in one-letter code: Vacuolar protein sorting-associated protein 17 (549 aa).

The 118-residue stretch at glycine 96–serine 213 folds into the PX domain. Residues valine 250–leucine 281 adopt a coiled-coil conformation. Residues glutamate 470–lysine 540 are disordered. Positions serine 498 to serine 507 are enriched in low complexity. Residues threonine 508 to glutamate 522 are compositionally biased toward polar residues.

The protein belongs to the VPS17 family. In terms of assembly, component of the retromer complex which consists of vps29, vps6, vps35, vps5 and vps17.

The protein localises to the cytoplasm. The protein resides in the nucleus. In terms of biological role, plays a role in vesicular protein sorting. Required for the endosome-to-Golgi retrieval of the vacuolar protein sorting receptor pep1/vps10. Component of the membrane-associated retromer complex which is essential in endosome-to-Golgi retrograde transport. The vps29-vps26-vps35 subcomplex may be involved in cargo selection. The polypeptide is Vacuolar protein sorting-associated protein 17 (vps17) (Schizosaccharomyces pombe (strain 972 / ATCC 24843) (Fission yeast)).